Reading from the N-terminus, the 204-residue chain is Somatotropin (204 aa).

The N-terminal stretch at 1-17 is a signal peptide; it reads MDRAVLLLSVLSLGVSS. Position 18 is a pyrrolidone carboxylic acid (Gln18). His35 serves as a coordination point for Zn(2+). An intrachain disulfide couples Cys69 to Cys177. Glu186 is a Zn(2+) binding site. Cysteines 194 and 202 form a disulfide.

Belongs to the somatotropin/prolactin family.

Its subcellular location is the secreted. Functionally, growth hormone plays an important role in growth control and is involved in the regulation of several anabolic processes. Implicated as an osmoregulatory substance important for seawater adaptation. The polypeptide is Somatotropin (gh) (Morone saxatilis (Striped bass)).